We begin with the raw amino-acid sequence, 156 residues long: Ribosomal RNA large subunit methyltransferase H (156 aa).

S-adenosyl-L-methionine is bound by residues Leu-73, Gly-104, and 123–128; that span reads LSALTL.

The protein belongs to the RNA methyltransferase RlmH family. Homodimer.

Its subcellular location is the cytoplasm. The enzyme catalyses pseudouridine(1915) in 23S rRNA + S-adenosyl-L-methionine = N(3)-methylpseudouridine(1915) in 23S rRNA + S-adenosyl-L-homocysteine + H(+). Its function is as follows. Specifically methylates the pseudouridine at position 1915 (m3Psi1915) in 23S rRNA. The chain is Ribosomal RNA large subunit methyltransferase H from Shewanella sediminis (strain HAW-EB3).